The sequence spans 624 residues: Bifunctional 3'-phosphoadenosine 5'-phosphosulfate synthase 1 (624 aa).

Met-1 is subject to N-acetylmethionine. Positions Met-1–Ile-225 are adenylyl-sulfate kinase. An N6-acetyllysine modification is found at Lys-12. Residue Gly-62–Thr-67 coordinates ATP. Adenosine 5'-phosphosulfate contacts are provided by residues Asp-89–Arg-92, Phe-101, Arg-106–Asn-109, Ile-132–Ser-133, Lys-171, and Gly-184–Phe-185. Residues Cys-207, Cys-212, Gln-419 to Asn-422, Gly-521 to Ala-525, and Ala-563 contribute to the ATP site. A sulfate adenylyltransferase region spans residues Val-234–Ala-624.

It in the N-terminal section; belongs to the APS kinase family. In the C-terminal section; belongs to the sulfate adenylyltransferase family. In terms of assembly, homodimer. Expressed in the neonatal brain and in cartilage.

It carries out the reaction sulfate + ATP + H(+) = adenosine 5'-phosphosulfate + diphosphate. The catalysed reaction is adenosine 5'-phosphosulfate + ATP = 3'-phosphoadenylyl sulfate + ADP + H(+). It functions in the pathway sulfur metabolism; sulfate assimilation. Functionally, bifunctional enzyme with both ATP sulfurylase and APS kinase activity, which mediates two steps in the sulfate activation pathway. The first step is the transfer of a sulfate group to ATP to yield adenosine 5'-phosphosulfate (APS), and the second step is the transfer of a phosphate group from ATP to APS yielding 3'-phosphoadenylylsulfate (PAPS: activated sulfate donor used by sulfotransferase). In mammals, PAPS is the sole source of sulfate; APS appears to be only an intermediate in the sulfate-activation pathway. Required for normal biosynthesis of sulfated L-selectin ligands in endothelial cells. The chain is Bifunctional 3'-phosphoadenosine 5'-phosphosulfate synthase 1 (Papss1) from Mus musculus (Mouse).